A 306-amino-acid polypeptide reads, in one-letter code: Flavin adenine dinucleotide synthase (306 aa).

FAD is bound by residues serine 59, isoleucine 107, glycine 164, 182–185 (DSNW), arginine 190, and arginine 300.

The protein belongs to the PAPS reductase family. FAD1 subfamily.

It localises to the cytoplasm. The enzyme catalyses FMN + ATP + H(+) = FAD + diphosphate. It participates in cofactor biosynthesis; FAD biosynthesis; FAD from FMN: step 1/1. Its function is as follows. Catalyzes the adenylation of flavin mononucleotide (FMN) to form flavin adenine dinucleotide (FAD) coenzyme. This is Flavin adenine dinucleotide synthase from Saccharomyces cerevisiae (strain ATCC 204508 / S288c) (Baker's yeast).